The primary structure comprises 346 residues: Sensor histidine kinase GraS (346 aa).

The next 2 membrane-spanning stretches (helical) occupy residues 15–35 and 43–63; these read MNWIFWILFLNFLMLGISLID and LFYIVSLNLSLTMIFLLLTYF. The region spanning 126–332 is the Histidine kinase domain; sequence EFVHDIKTPV…TVRLIFPLQN (207 aa).

Interacts with GraX.

Its subcellular location is the cell membrane. It catalyses the reaction ATP + protein L-histidine = ADP + protein N-phospho-L-histidine.. Member of the two-component regulatory system GraR/GraS involved in resistance against cationic antimicrobial peptides (CAMPs). Functions as a sensor protein kinase which phosphorylates GraR through the auxiliary protein GraX. In turn, GraR up-regulates many genes such as adhesins, exoproteins, transporters, toxins, and proteins involved in cell wall synthesis. Down-regulates the expression of many genes involved in RNA and amino acid synthesis or glycolysis. The chain is Sensor histidine kinase GraS (graS) from Staphylococcus aureus (strain COL).